A 343-amino-acid polypeptide reads, in one-letter code: MKVILLFVLAVFTVFVSSRGIPLEEQSQFLEFQDKFNKKYSHEEYLERFEIFKSNLGKIEELNLIAINHKADTKFGVNKFADLSSDEFKNYYLNNKEAIFTDDLPVADYLDDEFINSIPTAFDWRTRGAVTPVKNQGQCGSCWSFSTTGNVEGQHFISQNKLVSLSEQNLVDCDHECMEYEGEQACDEGCNGGLQPNAYNYIIKNGGIQTESSYPYTAETGTQCNFNSANIGAKISNFTMIPKNETVMAGYIVSTGPLAIAADAVEWQFYIGGVFDIPCNPNSLDHGILIVGYSAKNTIFRKNMPYWIVKNSWGADWGEQGYIYLRRGKNTCGVSNFVSTSII.

The first 18 residues, 1–18 (MKVILLFVLAVFTVFVSS), serve as a signal peptide directing secretion. A propeptide spans 19–117 (RGIPLEEQSQ…DYLDDEFINS (99 aa)) (activation peptide). Intrachain disulfides connect C139/C190, C173/C224, and C279/C332. Residue C142 is part of the active site. Catalysis depends on residues H286 and N311.

The protein belongs to the peptidase C1 family. Post-translationally, phosphoglycosylated, contains GlcNAc-alpha-1-P-Ser residues.

It is found in the lysosome. Functionally, cysteine proteinases 1 and 2 are believed to participate in the breakdown of protein during differentiation of Dictyostelium as a response to starvation. This is Cysteine proteinase 1 (cprA) from Dictyostelium discoideum (Social amoeba).